Here is a 38-residue protein sequence, read N- to C-terminus: Large ribosomal subunit protein bL36 (38 aa).

The protein belongs to the bacterial ribosomal protein bL36 family.

The chain is Large ribosomal subunit protein bL36 from Gemmatimonas aurantiaca (strain DSM 14586 / JCM 11422 / NBRC 100505 / T-27).